Reading from the N-terminus, the 403-residue chain is Phosphopentomutase (403 aa).

Mn(2+) is bound by residues aspartate 13, aspartate 298, histidine 303, aspartate 339, histidine 340, and histidine 351.

This sequence belongs to the phosphopentomutase family. Mn(2+) is required as a cofactor.

Its subcellular location is the cytoplasm. The catalysed reaction is 2-deoxy-alpha-D-ribose 1-phosphate = 2-deoxy-D-ribose 5-phosphate. The enzyme catalyses alpha-D-ribose 1-phosphate = D-ribose 5-phosphate. The protein operates within carbohydrate degradation; 2-deoxy-D-ribose 1-phosphate degradation; D-glyceraldehyde 3-phosphate and acetaldehyde from 2-deoxy-alpha-D-ribose 1-phosphate: step 1/2. Isomerase that catalyzes the conversion of deoxy-ribose 1-phosphate (dRib-1-P) and ribose 1-phosphate (Rib-1-P) to deoxy-ribose 5-phosphate (dRib-5-P) and ribose 5-phosphate (Rib-5-P), respectively. This Streptococcus pyogenes serotype M12 (strain MGAS2096) protein is Phosphopentomutase.